A 609-amino-acid polypeptide reads, in one-letter code: UvrABC system protein C (609 aa).

A GIY-YIG domain is found at 15 to 92; sequence TGSGVYQMQD…IKQFRPRYNV (78 aa). A UVR domain is found at 202 to 237; that stretch reads DQVIIKLTERMEVASENLVFEEAAHYRDQIRQLRRL.

It belongs to the UvrC family. As to quaternary structure, interacts with UvrB in an incision complex.

It localises to the cytoplasm. The UvrABC repair system catalyzes the recognition and processing of DNA lesions. UvrC both incises the 5' and 3' sides of the lesion. The N-terminal half is responsible for the 3' incision and the C-terminal half is responsible for the 5' incision. The chain is UvrABC system protein C from Coxiella burnetii (strain CbuK_Q154) (Coxiella burnetii (strain Q154)).